Here is a 232-residue protein sequence, read N- to C-terminus: Large ribosomal subunit protein uL1 (232 aa).

The protein belongs to the universal ribosomal protein uL1 family. In terms of assembly, part of the 50S ribosomal subunit.

Functionally, binds directly to 23S rRNA. The L1 stalk is quite mobile in the ribosome, and is involved in E site tRNA release. Protein L1 is also a translational repressor protein, it controls the translation of the L11 operon by binding to its mRNA. In Bacteroides fragilis (strain ATCC 25285 / DSM 2151 / CCUG 4856 / JCM 11019 / LMG 10263 / NCTC 9343 / Onslow / VPI 2553 / EN-2), this protein is Large ribosomal subunit protein uL1.